A 277-amino-acid chain; its full sequence is UPF0276 protein PP_2398 (277 aa).

Belongs to the UPF0276 family.

This Pseudomonas putida (strain ATCC 47054 / DSM 6125 / CFBP 8728 / NCIMB 11950 / KT2440) protein is UPF0276 protein PP_2398.